Consider the following 216-residue polypeptide: MPVQVVSSEFVKTATRPPEWPRGQTPELAFVGRSNVGKSSMLNALTRKKGLARVSATPGRTRALQFFDVAYRPTPAARPRHVRFCDLPGYGYAKVSREERDRWAAMIEDYLRDRDVLRAVVLIVDARHAPSDSDVDAAAFLRATGRRVLVAATKMDKLPKTRRGAALRAVEGALALAKGEAVPFSAVEGTGTDALWARIASAATDEGAPAPAGAGA.

One can recognise an EngB-type G domain in the interval 24 to 205 (QTPELAFVGR…WARIASAATD (182 aa)). GTP contacts are provided by residues 32 to 39 (GRSNVGKS), 59 to 63 (GRTRA), 86 to 89 (DLPG), 153 to 156 (TKMD), and 184 to 186 (FSA). Mg(2+) contacts are provided by S39 and T61.

It belongs to the TRAFAC class TrmE-Era-EngA-EngB-Septin-like GTPase superfamily. EngB GTPase family. It depends on Mg(2+) as a cofactor.

Its function is as follows. Necessary for normal cell division and for the maintenance of normal septation. The protein is Probable GTP-binding protein EngB of Anaeromyxobacter sp. (strain Fw109-5).